Reading from the N-terminus, the 175-residue chain is Small ribosomal subunit protein uS7 (175 aa).

Belongs to the universal ribosomal protein uS7 family. As to quaternary structure, part of the 30S ribosomal subunit. Contacts proteins S9 and S11.

Its function is as follows. One of the primary rRNA binding proteins, it binds directly to 16S rRNA where it nucleates assembly of the head domain of the 30S subunit. Is located at the subunit interface close to the decoding center, probably blocks exit of the E-site tRNA. The protein is Small ribosomal subunit protein uS7 of Legionella pneumophila (strain Paris).